Reading from the N-terminus, the 104-residue chain is Co-chaperonin GroES 3 (104 aa).

The protein belongs to the GroES chaperonin family. As to quaternary structure, heptamer of 7 subunits arranged in a ring. Interacts with the chaperonin GroEL.

The protein resides in the cytoplasm. In terms of biological role, together with the chaperonin GroEL, plays an essential role in assisting protein folding. The GroEL-GroES system forms a nano-cage that allows encapsulation of the non-native substrate proteins and provides a physical environment optimized to promote and accelerate protein folding. GroES binds to the apical surface of the GroEL ring, thereby capping the opening of the GroEL channel. In Bradyrhizobium diazoefficiens (strain JCM 10833 / BCRC 13528 / IAM 13628 / NBRC 14792 / USDA 110), this protein is Co-chaperonin GroES 3.